The primary structure comprises 166 residues: Cyclin-dependent kinase 4 inhibitor D (166 aa).

Methionine 1 is subject to N-acetylmethionine. 4 ANK repeats span residues 41–69 (FGKTALQVMMFGSTAIALELLKQGASPNV), 73–102 (SGTSPVHDAARTGFLDTLKVLVEHGADVNV), 106–135 (TGALPIHLAVQEGHTAVVSFLAAESDLHRR), and 138–166 (RGLTPLELALQRGAQDLVDILQGHMVAPL).

The protein belongs to the CDKN2 cyclin-dependent kinase inhibitor family. Interacts with CDK6.

The protein resides in the nucleus. The protein localises to the cytoplasm. In terms of biological role, interacts strongly with CDK4 and CDK6 and inhibits them. In Homo sapiens (Human), this protein is Cyclin-dependent kinase 4 inhibitor D (CDKN2D).